A 186-amino-acid chain; its full sequence is GPI-anchored hemophore ARB_02741 (186 aa).

The signal sequence occupies residues 1 to 18; sequence MKFSQAVIALAAATVVSA. Residues 19–108 form the CFEM domain; the sequence is QLPDVPQCSL…SSKPSEPSTS (90 aa). 4 cysteine pairs are disulfide-bonded: cysteine 26-cysteine 67, cysteine 30-cysteine 62, cysteine 40-cysteine 48, and cysteine 50-cysteine 83. Position 45 (aspartate 45) interacts with heme. Residues 89 to 159 are disordered; it reads PVSIPPVEES…NTGVPTQSTP (71 aa). Residues 96 to 131 are compositionally biased toward low complexity; that stretch reads EESSSKPSEPSTSEAPTASPTESTPAPTTPAPTGTG. Positions 132–144 are enriched in gly residues; the sequence is SPSGTGAPGGPSG. Residues 148 to 159 show a composition bias toward polar residues; sequence FTNTGVPTQSTP. Glycine 163 is lipidated: GPI-anchor amidated glycine. Residues 164–186 constitute a propeptide, removed in mature form; sequence AASGLSANIGGMGAAILAIAAYL.

Belongs to the RBT5 family. Post-translationally, the GPI-anchor is attached to the protein in the endoplasmic reticulum and serves to target the protein to the cell surface. There, the glucosamine-inositol phospholipid moiety is cleaved off and the GPI-modified mannoprotein is covalently attached via its lipidless GPI glycan remnant to the 1,6-beta-glucan of the outer cell wall layer.

The protein localises to the secreted. It is found in the cell wall. Its subcellular location is the cell membrane. In terms of biological role, GPI-anchored cell wall protein involved in stabilizing the cell wall. This chain is GPI-anchored hemophore ARB_02741, found in Arthroderma benhamiae (strain ATCC MYA-4681 / CBS 112371) (Trichophyton mentagrophytes).